Consider the following 557-residue polypeptide: Formate--tetrahydrofolate ligase (557 aa).

66–73 contributes to the ATP binding site; sequence TPAGEGKS.

It belongs to the formate--tetrahydrofolate ligase family.

It carries out the reaction (6S)-5,6,7,8-tetrahydrofolate + formate + ATP = (6R)-10-formyltetrahydrofolate + ADP + phosphate. The protein operates within one-carbon metabolism; tetrahydrofolate interconversion. This is Formate--tetrahydrofolate ligase from Clostridium botulinum (strain ATCC 19397 / Type A).